Consider the following 474-residue polypeptide: Nitrogenase vanadium-iron protein alpha chain (474 aa).

[8Fe-7S] cluster contacts are provided by Cys49, Cys75, and Cys138. Residues Cys257 and His423 each coordinate [7Fe-V-9S-C-homocitryl] cluster.

This sequence belongs to the NifD/NifK/NifE/NifN family. Hexamer of two alpha, two beta, and two delta chains. It depends on [8Fe-7S] cluster as a cofactor. The cofactor is [7Fe-V-9S-C-homocitryl] cluster.

It carries out the reaction N2 + 8 reduced [2Fe-2S]-[ferredoxin] + 16 ATP + 16 H2O = H2 + 8 oxidized [2Fe-2S]-[ferredoxin] + 2 NH4(+) + 16 ADP + 16 phosphate + 6 H(+). This vanadium-iron protein is part of the nitrogenase complex that catalyzes the key enzymatic reactions in nitrogen fixation. This Azotobacter vinelandii protein is Nitrogenase vanadium-iron protein alpha chain (vnfD).